The primary structure comprises 286 residues: Putative inorganic pyrophosphatase C3A12.02 (286 aa).

Diphosphate is bound at residue Arg85. The Mg(2+) site is built by Asp122, Asp127, and Asp159.

The protein belongs to the PPase family. Mg(2+) is required as a cofactor.

The protein resides in the cytoplasm. It carries out the reaction diphosphate + H2O = 2 phosphate + H(+). In Schizosaccharomyces pombe (strain 972 / ATCC 24843) (Fission yeast), this protein is Putative inorganic pyrophosphatase C3A12.02.